We begin with the raw amino-acid sequence, 89 residues long: UPF0335 protein RPE_4107 (89 aa).

Belongs to the UPF0335 family.

This Rhodopseudomonas palustris (strain BisA53) protein is UPF0335 protein RPE_4107.